Here is a 506-residue protein sequence, read N- to C-terminus: MTAPKPVVLCILDGWGLRAEREANAVALADTPTFDRLMATCPNATLVTHGPDVGLPRGQMGNSEVGHTNIGAGRVVAMDLGAIDLAIEEGSFPQNPALRDFIAKVKANGGTAHLMGVVSDGGVHGHIQHLISAVEVLAGEGIPVVIHAITDGRDVAPTSAGEFVGQLVRVLPEGARIGTVIGRYWAMDRDKRWDRVKRASDAMLHATGEHAPDAEAAVAAALARGETDEFIAPTVVGDYAGARDGDGFFCLNFRADRAREILAGLGQPGFDAYETGTRPDWSAFLGMVDYSKEHDRFMTAAYPKPVIRNTLGEWVASHGLRQFRIAETEKYPHVTFFLNGGREAPETGEDRYMANSPKVATYDLQPEMSAPDVSDHLVEAIGAGYDLIVVNYANPDMVGHTGDLKAAMAAVEEVDRGLGRAVEAVTTAGGAMIVTADHGNCETMVDPETGGPHTAHTTNPVPVILVNGPAGARLHAGRLADLAPTLLQLMQLPQPEEMTGRSLIDA.

2 residues coordinate Mn(2+): aspartate 13 and serine 63. Residue serine 63 is the Phosphoserine intermediate of the active site. Residues histidine 124, 153–154 (RD), arginine 183, arginine 189, 254–257 (RADR), and lysine 330 each bind substrate. Mn(2+)-binding residues include aspartate 396, histidine 400, aspartate 437, histidine 438, and histidine 456.

This sequence belongs to the BPG-independent phosphoglycerate mutase family. Monomer. Requires Mn(2+) as cofactor.

It carries out the reaction (2R)-2-phosphoglycerate = (2R)-3-phosphoglycerate. Its pathway is carbohydrate degradation; glycolysis; pyruvate from D-glyceraldehyde 3-phosphate: step 3/5. Functionally, catalyzes the interconversion of 2-phosphoglycerate and 3-phosphoglycerate. In Cereibacter sphaeroides (strain ATCC 17029 / ATH 2.4.9) (Rhodobacter sphaeroides), this protein is 2,3-bisphosphoglycerate-independent phosphoglycerate mutase.